The sequence spans 212 residues: Cytidylate kinase (212 aa).

7 to 15 (GPAASGKGT) provides a ligand contact to ATP.

Belongs to the cytidylate kinase family. Type 1 subfamily.

It is found in the cytoplasm. It carries out the reaction CMP + ATP = CDP + ADP. It catalyses the reaction dCMP + ATP = dCDP + ADP. This is Cytidylate kinase from Bradyrhizobium diazoefficiens (strain JCM 10833 / BCRC 13528 / IAM 13628 / NBRC 14792 / USDA 110).